The primary structure comprises 140 residues: Small ribosomal subunit protein uS12 (140 aa).

Asp-102 carries the 3-methylthioaspartic acid modification.

This sequence belongs to the universal ribosomal protein uS12 family. In terms of assembly, part of the 30S ribosomal subunit. Contacts proteins S8 and S17. May interact with IF1 in the 30S initiation complex.

In terms of biological role, with S4 and S5 plays an important role in translational accuracy. Functionally, interacts with and stabilizes bases of the 16S rRNA that are involved in tRNA selection in the A site and with the mRNA backbone. Located at the interface of the 30S and 50S subunits, it traverses the body of the 30S subunit contacting proteins on the other side and probably holding the rRNA structure together. The combined cluster of proteins S8, S12 and S17 appears to hold together the shoulder and platform of the 30S subunit. The sequence is that of Small ribosomal subunit protein uS12 from Geobacillus stearothermophilus (Bacillus stearothermophilus).